A 747-amino-acid chain; its full sequence is Potassium transporter 20 (747 aa).

Residues 1 to 47 (MSVQEDDDAAGPEVDRLRRHDSFYGDAEKVSNDKSHGTGENWARTLQ) are Cytoplasmic-facing. The helical transmembrane segment at 48–68 (LAFQSIGVVYGDVGTSPLYVY) threads the bilayer. Residues 69-84 (SSTFPDGVKHPDDLVG) lie on the Extracellular side of the membrane. Residues 85-105 (VLSLMLYTLILIPMVKYVFIV) traverse the membrane as a helical segment. Topologically, residues 106–171 (LYANDNGDGG…QKLESSNAAK (66 aa)) are cytoplasmic. Residues 172–192 (IALFTITILGTSMVMGDGTLT) traverse the membrane as a helical segment. Over 193–209 (PAISVLSAVSGIREKAP) the chain is Extracellular. Residues 210–230 (SLTQLQVVWISVPILIVLFSV) form a helical membrane-spanning segment. Residues 231-237 (QRFGTDK) lie on the Cytoplasmic side of the membrane. The helical transmembrane segment at 238-258 (VGYSFAPVISVWFVLIAGIGA) threads the bilayer. Residues 259-288 (YNLAVHEITILRAFNPMYIIDYFRRNGKEA) lie on the Extracellular side of the membrane. The chain crosses the membrane as a helical span at residues 289 to 309 (WVSLGGAVLCITGTEAMFADL). Residues 310–318 (GHFNIRAIQ) are Cytoplasmic-facing. A helical transmembrane segment spans residues 319 to 339 (LSFTCVLFPSVALCYMGQAAY). At 340–353 (LRKFPEDVGDTFYK) the chain is on the extracellular side. A helical membrane pass occupies residues 354-374 (SLPAPLFWPVFVVAIMAAIIA). At 375–410 (SQAMLSGAFAILSKALPLGCFPRVEVVHTSNKYEGQ) the chain is on the cytoplasmic side. The helical transmembrane segment at 411–431 (VYIPEVNFLIGVASVAITVAF) threads the bilayer. Over 432–442 (QTTANIGNAYG) the chain is Extracellular. The chain crosses the membrane as a helical span at residues 443–463 (ICVVMVFSITTHLMTVVMLLI). Residues 464–469 (WKVRLP) are Cytoplasmic-facing. Residues 470 to 490 (FIAAFYVVFTFTEFLYLSSIL) traverse the membrane as a helical segment. The Extracellular segment spans residues 491–496 (SKFAEG). Residues 497–517 (GYLPFCFSLVLMALMATWHYV) traverse the membrane as a helical segment. Over 518 to 747 (HVKRYWYELD…LLKVGITYEI (230 aa)) the chain is Cytoplasmic.

The protein belongs to the HAK/KUP transporter (TC 2.A.72.3) family.

It localises to the membrane. High-affinity potassium transporter. The chain is Potassium transporter 20 (HAK20) from Oryza sativa subsp. japonica (Rice).